Here is a 395-residue protein sequence, read N- to C-terminus: MAVFGMVSAVSGFIKIRYLLDKAVIDNMVFRCHYRITTAILFTCCIIVTANNLIGDPISCINDGAIPMHVINTFCWITYTYTIPGQQHRQIGTDVAGPGLGNEYGQEKRYHSYYQWVPFVLFFQGLMFYVPHWVWKNMEDGKIRMITDGLRGMVSVPDDYRRDRQDRILKYFVNSLNTHNGYSFAYFFCELLNFINVIVNIFMVDKFLGGAFMSYGTDVLKFSNMDQDKRFDPMIEIFPRLTKCTFHKFGPSGSVQKHDTLCVLALNILNEKIYIFLWFWFIILATISGVAVLYSLVVIMMPTTRETIIKRSYRSAQRKEIAGLVRRLEIGDFLILHFLSQNLSTRSYSDMLQQLCGLLGASRTPSAPSTLEMNRISHPIYPPVETFGGGKETET.

Topologically, residues 1-37 are cytoplasmic; it reads MAVFGMVSAVSGFIKIRYLLDKAVIDNMVFRCHYRIT. A helical membrane pass occupies residues 38–58; it reads TAILFTCCIIVTANNLIGDPI. At 59-114 the chain is on the extracellular side; that stretch reads SCINDGAIPMHVINTFCWITYTYTIPGQQHRQIGTDVAGPGLGNEYGQEKRYHSYY. Residues 115–135 traverse the membrane as a helical segment; sequence QWVPFVLFFQGLMFYVPHWVW. Topologically, residues 136-183 are cytoplasmic; it reads KNMEDGKIRMITDGLRGMVSVPDDYRRDRQDRILKYFVNSLNTHNGYS. A helical transmembrane segment spans residues 184–204; that stretch reads FAYFFCELLNFINVIVNIFMV. Topologically, residues 205–272 are extracellular; that stretch reads DKFLGGAFMS…VLALNILNEK (68 aa). A helical transmembrane segment spans residues 273 to 293; that stretch reads IYIFLWFWFIILATISGVAVL. The Cytoplasmic portion of the chain corresponds to 294–395; that stretch reads YSLVVIMMPT…TFGGGKETET (102 aa). Residues serine 366 and serine 377 each carry the phosphoserine modification. Tyrosine 381 carries the post-translational modification Phosphotyrosine.

The protein belongs to the pannexin family. In terms of assembly, heterooligomer of Inx2 (via cytoplasmic C-terminal region) and Inx3 (via cytoplasmic C-terminal region). In terms of tissue distribution, in ovary, expressed in nurse cells and follicle cells. Expressed in embryonic epithelial cells. Ubiquitously expressed in stage 5 embryos. Expressed in foregut and hindgut from stage 11-17 and in proventriculus, epidermis and CNS in stage 16 embryos (at protein level). Expressed in anterior and ventral regions in stage 8 embryos. Repeating epidermal pattern emerges at stage 11, refines to one or two cells at each side of the segment borders by stage 13. Expressed in the imaginal wing disk. In pupae, expressed in the CNS and in secondary and tertiary pigment cells of the retina.

It localises to the cell membrane. The protein localises to the cell junction. It is found in the gap junction. Its subcellular location is the cytoplasm. The protein resides in the lateral cell membrane. It localises to the apicolateral cell membrane. Structural components of the gap junctions. Essential for proper epithelial development of the epidermis. This Drosophila melanogaster (Fruit fly) protein is Innexin inx3 (Inx3).